The primary structure comprises 258 residues: Oxidoreductase fscI (258 aa).

Residues L34, R59, D82, N109, and K141 each contribute to the NADP(+) site. S163 (proton donor) is an active-site residue. R193 provides a ligand contact to NADP(+).

This sequence belongs to the short-chain dehydrogenases/reductases (SDR) family.

The protein operates within secondary metabolite biosynthesis. Its function is as follows. Oxidoreductase; part of the fragmented gene cluster that mediates the biosynthesis of fusarochromene, a tryptophan-derived metabolite closely related to a group of mycotoxins including fusarochromanone. Within the pathway, fscI catalyzes the formation of the chromene ring from the prenyl moity added by the prenyltransferase fscG. The first step of the pathway is the epimerization of L-tryptophan to D-tryptophan in the presence of the NRPS-like tryptophan epimerase fscC. D-tryptophan is subsequently hydroxylated by the tryptophan 6-hydroxylase fscE to yield 6-hydroxytryptophan. The pyrrole ring undergoes cleavaged by the tryptophan 2,3-dioxygenase fscD and is finally converted to 4-hydroxykyrunenine by the hydrolase fscH. The NRPS-like oxidoreductase fscA reduces the carboxyl group to primary alcohol and the DMATS-type prenyltransferase fscG performs prenylation, followed by the formation of a chromene ring catalyzed by the oxidoreductase fscI, which leads to desacetylfusarochromene. Epoxidation by fscF and rearrangement reactions of chromene double bonds convert compound desacetylfusarochromene to fusarochromanones. Although specific acetyltransferases were not found near the fsc gene cluster, several predicted enzymes containing the N-acetyltransferase superfamily domain are present in the genome of F.equiseti. These predicted enzymes may have the potential to convert desacetylfusarochromene to fusarochromene. The sequence is that of Oxidoreductase fscI from Fusarium equiseti (Fusarium scirpi).